A 283-amino-acid chain; its full sequence is Phosphatidylglycerol--prolipoprotein diacylglyceryl transferase (283 aa).

The next 3 helical transmembrane spans lie at 17–37, 56–76, and 88–108; these read LAVR…TFLG, FLTW…VLFY, and IFKV…VVIA. Arg-139 contacts a 1,2-diacyl-sn-glycero-3-phospho-(1'-sn-glycerol). Helical transmembrane passes span 222 to 242 and 255 to 275; these read GQVA…AEFA and GLSM…VGFV.

It belongs to the Lgt family.

It localises to the cell inner membrane. The enzyme catalyses L-cysteinyl-[prolipoprotein] + a 1,2-diacyl-sn-glycero-3-phospho-(1'-sn-glycerol) = an S-1,2-diacyl-sn-glyceryl-L-cysteinyl-[prolipoprotein] + sn-glycerol 1-phosphate + H(+). Its pathway is protein modification; lipoprotein biosynthesis (diacylglyceryl transfer). Catalyzes the transfer of the diacylglyceryl group from phosphatidylglycerol to the sulfhydryl group of the N-terminal cysteine of a prolipoprotein, the first step in the formation of mature lipoproteins. The polypeptide is Phosphatidylglycerol--prolipoprotein diacylglyceryl transferase (Neisseria meningitidis serogroup B (strain ATCC BAA-335 / MC58)).